The chain runs to 238 residues: Tetrahydromethanopterin S-methyltransferase subunit A 1 (238 aa).

The Cytoplasmic portion of the chain corresponds to 2–218; sequence VEKKSPAEGW…RMFAGMYSGK (217 aa). A 5-hydroxybenzimidazolylcob(I)amide-binding site is contributed by His-84. The helical transmembrane segment at 219 to 237 threads the bilayer; sequence VQGIMIGLAFTLTLGILLL. Val-238 is a topological domain (extracellular).

This sequence belongs to the MtrA family. As to quaternary structure, the complex is composed of 8 subunits; MtrA, MtrB, MtrC, MtrD, MtrE, MtrF, MtrG and MtrH. Requires 5-hydroxybenzimidazolylcob(I)amide as cofactor.

Its subcellular location is the cell membrane. It catalyses the reaction 5-methyl-5,6,7,8-tetrahydromethanopterin + coenzyme M + 2 Na(+)(in) = 5,6,7,8-tetrahydromethanopterin + methyl-coenzyme M + 2 Na(+)(out). It functions in the pathway one-carbon metabolism; methanogenesis from CO(2); methyl-coenzyme M from 5,10-methylene-5,6,7,8-tetrahydromethanopterin: step 2/2. Its function is as follows. Part of a complex that catalyzes the formation of methyl-coenzyme M and tetrahydromethanopterin from coenzyme M and methyl-tetrahydromethanopterin. This is an energy-conserving, sodium-ion translocating step. The protein is Tetrahydromethanopterin S-methyltransferase subunit A 1 of Methanothermobacter thermautotrophicus (strain ATCC 29096 / DSM 1053 / JCM 10044 / NBRC 100330 / Delta H) (Methanobacterium thermoautotrophicum).